The chain runs to 174 residues: Cuticle protein 1 (174 aa).

Positions 1–18 (MRFLIAFVAILGYASASA) are cleaved as a signal peptide.

The protein resides in the secreted. In Lonomia obliqua (Moth), this protein is Cuticle protein 1.